We begin with the raw amino-acid sequence, 339 residues long: MISFNNVSKVYETGGQSVHAVEDVTLSVEKGEIFGIIGFSGAGKSTLLRLVNMLERPTAGTISIDDKEITSLSTKELRKLRQRIGMIFQSFNLFNSRTVFGNIAYPLKLAKVPKNEIKERVNELLKFVGLEDKANNYPEQLSGGQKQRVGIARALATSPDILICDEATSALDPETTTEILNLLKKVNREYNLTILLITHEMHVVKEICHRVAVMEKGKVIEEGKLFDVFTQPKTKTTQNFVRSVINDHLPESVLAKIQNGGQIYRLTFTGEETGQPVLSYIAKNYNVDVNVLYGNIIELQNVLFGNLLVELQGEQREIQKALQHLRLQVQLKEVEAHAS.

The region spanning 2-241 (ISFNNVSKVY…PKTKTTQNFV (240 aa)) is the ABC transporter domain. 38-45 (GFSGAGKS) contacts ATP.

The protein belongs to the ABC transporter superfamily. Methionine importer (TC 3.A.1.24) family. In terms of assembly, the complex is composed of two ATP-binding proteins (MetN), two transmembrane proteins (MetI) and a solute-binding protein (MetQ).

The protein localises to the cell membrane. The catalysed reaction is L-methionine(out) + ATP + H2O = L-methionine(in) + ADP + phosphate + H(+). The enzyme catalyses D-methionine(out) + ATP + H2O = D-methionine(in) + ADP + phosphate + H(+). Part of the ABC transporter complex MetNIQ involved in methionine import. Responsible for energy coupling to the transport system. The chain is Methionine import ATP-binding protein MetN 2 from Bacillus cereus (strain ATCC 10987 / NRS 248).